The sequence spans 263 residues: Proliferating cell nuclear antigen (263 aa).

The DNA-binding element occupies 61–80 (RCDRTINLGLSLANMSKALK).

The protein belongs to the PCNA family. Homotrimer. Forms a complex with activator 1 heteropentamer in the presence of ATP.

It localises to the nucleus. In terms of biological role, this protein is an auxiliary protein of DNA polymerase delta and is involved in the control of eukaryotic DNA replication by increasing the polymerase's processibility during elongation of the leading strand. This is Proliferating cell nuclear antigen (pcn-1) from Caenorhabditis elegans.